The chain runs to 671 residues: DNA ligase (671 aa).

NAD(+)-binding positions include aspartate 34–aspartate 38, serine 83–leucine 84, and glutamate 117. Lysine 119 functions as the N6-AMP-lysine intermediate in the catalytic mechanism. 4 residues coordinate NAD(+): arginine 140, glutamate 177, lysine 293, and lysine 317. Residues cysteine 411, cysteine 414, cysteine 429, and cysteine 434 each contribute to the Zn(2+) site. The BRCT domain occupies lysine 591–glutamine 671.

It belongs to the NAD-dependent DNA ligase family. LigA subfamily. The cofactor is Mg(2+). Mn(2+) serves as cofactor.

The catalysed reaction is NAD(+) + (deoxyribonucleotide)n-3'-hydroxyl + 5'-phospho-(deoxyribonucleotide)m = (deoxyribonucleotide)n+m + AMP + beta-nicotinamide D-nucleotide.. DNA ligase that catalyzes the formation of phosphodiester linkages between 5'-phosphoryl and 3'-hydroxyl groups in double-stranded DNA using NAD as a coenzyme and as the energy source for the reaction. It is essential for DNA replication and repair of damaged DNA. The polypeptide is DNA ligase (Geobacter metallireducens (strain ATCC 53774 / DSM 7210 / GS-15)).